The primary structure comprises 139 residues: Large ribosomal subunit protein uL16 (139 aa).

Residues 74 to 94 (LTKKPAETRQGSGKGSPESWV) form a disordered region.

It belongs to the universal ribosomal protein uL16 family. In terms of assembly, part of the 50S ribosomal subunit.

Functionally, binds 23S rRNA and is also seen to make contacts with the A and possibly P site tRNAs. The polypeptide is Large ribosomal subunit protein uL16 (Saccharopolyspora erythraea (strain ATCC 11635 / DSM 40517 / JCM 4748 / NBRC 13426 / NCIMB 8594 / NRRL 2338)).